Here is a 363-residue protein sequence, read N- to C-terminus: Chorismate synthase (363 aa).

Positions 48 and 54 each coordinate NADP(+). FMN-binding positions include 125 to 127 (RSS), 237 to 238 (NA), G277, 292 to 296 (KPTSS), and R318.

It belongs to the chorismate synthase family. As to quaternary structure, homotetramer. It depends on FMNH2 as a cofactor.

The enzyme catalyses 5-O-(1-carboxyvinyl)-3-phosphoshikimate = chorismate + phosphate. It participates in metabolic intermediate biosynthesis; chorismate biosynthesis; chorismate from D-erythrose 4-phosphate and phosphoenolpyruvate: step 7/7. Its function is as follows. Catalyzes the anti-1,4-elimination of the C-3 phosphate and the C-6 proR hydrogen from 5-enolpyruvylshikimate-3-phosphate (EPSP) to yield chorismate, which is the branch point compound that serves as the starting substrate for the three terminal pathways of aromatic amino acid biosynthesis. This reaction introduces a second double bond into the aromatic ring system. This is Chorismate synthase from Pseudomonas paraeruginosa (strain DSM 24068 / PA7) (Pseudomonas aeruginosa (strain PA7)).